The chain runs to 180 residues: uncharacterized protein (180 aa).

Positions 1–93 (MPSSVPKTSI…LPRRRNPGWV (93 aa)) are disordered. Low complexity-rich tracts occupy residues 9-25 (SIES…SQAS) and 47-64 (LTSS…SSSQ).

This is an uncharacterized protein from Homo sapiens (Human).